Here is a 572-residue protein sequence, read N- to C-terminus: Pentatricopeptide repeat-containing protein At1g26900, mitochondrial (572 aa).

The N-terminal 117 residues, 1–117 (MTLAITSRLR…RAFSVFNQLR (117 aa)), are a transit peptide targeting the mitochondrion. PPR repeat units lie at residues 89 to 123 (NLFM…GLTL), 124 to 158 (DRFS…GFMV), 159 to 189 (FTDL…MPQS), 191 to 225 (DAVT…EVVV), 226 to 260 (NVST…GLDL), 261 to 291 (DLHL…AIRK), 292 to 326 (DVVT…KMKP), 327 to 361 (NSST…RIAL), 362 to 392 (DAIL…MKDK), 393 to 427 (DVKS…NCKV), 430 to 460 (NEIT…MVEA), and 466 to 496 (KVEH…LPIT). The segment at 501–572 (AWRALLAACR…EAGYSAIEIE (72 aa)) is type E motif.

The protein belongs to the PPR family. PCMP-E subfamily.

The protein localises to the mitochondrion. The polypeptide is Pentatricopeptide repeat-containing protein At1g26900, mitochondrial (PCMP-E54) (Arabidopsis thaliana (Mouse-ear cress)).